The chain runs to 511 residues: ADP,ATP carrier protein 4 (511 aa).

The next 12 membrane-spanning stretches (helical) occupy residues 34–54 (VSKF…QNLI), 70–90 (IISF…TAIY), 102–122 (IFYL…YVIF), 157–177 (FSLF…LLFW), 192–212 (FYPL…QFLE), 231–251 (FHTL…IIAI), 296–316 (LIAT…GPWK), 330–350 (AAFI…FVVL), 361–381 (FTAA…FFAV), 390–410 (LIIA…IGAI), 453–473 (LGKS…PSAS), and 476–496 (SIST…LWAT).

The protein belongs to the ADP/ATP translocase tlc family.

It is found in the cell membrane. Its function is as follows. Provides the rickettsial cell with host ATP in exchange for rickettsial ADP. This is an obligate exchange system. This energy acquiring activity is an important component of rickettsial parasitism. This is ADP,ATP carrier protein 4 (tlcD) from Rickettsia conorii (strain ATCC VR-613 / Malish 7).